A 30-amino-acid chain; its full sequence is Cycloviolacin-O4 (30 aa).

Positions 1 to 30 (GIPCGESCVWIPCISSAIGCSCKNKVCYRN) form a cross-link, cyclopeptide (Gly-Asn). 3 disulfide bridges follow: cysteine 4–cysteine 20, cysteine 8–cysteine 22, and cysteine 13–cysteine 27.

This is a cyclic peptide. In terms of tissue distribution, expressed in petals, petioles, roots and runners but not in leaves (at protein level).

Its function is as follows. Probably participates in a plant defense mechanism. The protein is Cycloviolacin-O4 of Viola odorata (Sweet violet).